Consider the following 77-residue polypeptide: Neurotoxin LmNaTx21.1 (77 aa).

Residues leucine 1 to leucine 7 form the signal peptide. An LCN-type CS-alpha/beta domain is found at lysine 16–arginine 76. Cystine bridges form between cysteine 26–cysteine 75, cysteine 30–cysteine 51, cysteine 37–cysteine 58, and cysteine 41–cysteine 60.

Belongs to the long (4 C-C) scorpion toxin superfamily. Sodium channel inhibitor family. Alpha subfamily. As to expression, expressed by the venom gland.

It localises to the secreted. Binds voltage-independently at site-3 of voltage-gated sodium channels (Nav) and inhibits the inactivation of the activated channels, thereby blocking neuronal transmission. The protein is Neurotoxin LmNaTx21.1 of Lychas mucronatus (Chinese swimming scorpion).